Consider the following 232-residue polypeptide: Large ribosomal subunit protein uL1 (232 aa).

It belongs to the universal ribosomal protein uL1 family. Part of the 50S ribosomal subunit.

Its function is as follows. Binds directly to 23S rRNA. The L1 stalk is quite mobile in the ribosome, and is involved in E site tRNA release. Protein L1 is also a translational repressor protein, it controls the translation of the L11 operon by binding to its mRNA. This Xylella fastidiosa (strain M12) protein is Large ribosomal subunit protein uL1.